The chain runs to 142 residues: uncharacterized protein (142 aa).

This is an uncharacterized protein from Mycobacterium tuberculosis (strain CDC 1551 / Oshkosh).